Here is a 241-residue protein sequence, read N- to C-terminus: Triosephosphate isomerase (241 aa).

9 to 11 (NWK) contacts substrate. His-88 functions as the Electrophile in the catalytic mechanism. Glu-158 (proton acceptor) is an active-site residue. Residues Gly-164, Ser-203, and 224–225 (GG) contribute to the substrate site.

This sequence belongs to the triosephosphate isomerase family. As to quaternary structure, homodimer.

It localises to the cytoplasm. The enzyme catalyses D-glyceraldehyde 3-phosphate = dihydroxyacetone phosphate. It participates in carbohydrate biosynthesis; gluconeogenesis. It functions in the pathway carbohydrate degradation; glycolysis; D-glyceraldehyde 3-phosphate from glycerone phosphate: step 1/1. Its function is as follows. Involved in the gluconeogenesis. Catalyzes stereospecifically the conversion of dihydroxyacetone phosphate (DHAP) to D-glyceraldehyde-3-phosphate (G3P). In Dichelobacter nodosus (strain VCS1703A), this protein is Triosephosphate isomerase.